The primary structure comprises 562 residues: Arginine--tRNA ligase (562 aa).

The short motif at 136–146 is the 'HIGH' region element; it reads ANPTGPMHMGN.

This sequence belongs to the class-I aminoacyl-tRNA synthetase family. Monomer.

The protein resides in the cytoplasm. It carries out the reaction tRNA(Arg) + L-arginine + ATP = L-arginyl-tRNA(Arg) + AMP + diphosphate. This is Arginine--tRNA ligase (argS) from Caldanaerobacter subterraneus subsp. tengcongensis (strain DSM 15242 / JCM 11007 / NBRC 100824 / MB4) (Thermoanaerobacter tengcongensis).